A 443-amino-acid chain; its full sequence is Methyl-coenzyme M reductase II subunit beta (443 aa).

Residue Y367 coordinates coenzyme M. Position 369 (G369) interacts with coenzyme B.

Belongs to the methyl-coenzyme M reductase beta subunit family. In terms of assembly, MCR is a hexamer of two alpha, two beta, and two gamma chains, forming a dimer of heterotrimers. Coenzyme F430 is required as a cofactor.

It catalyses the reaction coenzyme B + methyl-coenzyme M = methane + coenzyme M-coenzyme B heterodisulfide. It participates in one-carbon metabolism; methyl-coenzyme M reduction; methane from methyl-coenzyme M: step 1/1. Functionally, component of the methyl-coenzyme M reductase (MCR) I that catalyzes the reductive cleavage of methyl-coenzyme M (CoM-S-CH3 or 2-(methylthio)ethanesulfonate) using coenzyme B (CoB or 7-mercaptoheptanoylthreonine phosphate) as reductant which results in the production of methane and the mixed heterodisulfide of CoB and CoM (CoM-S-S-CoB). This is the final step in methanogenesis. The protein is Methyl-coenzyme M reductase II subunit beta (mrtB) of Methanothermus fervidus (strain ATCC 43054 / DSM 2088 / JCM 10308 / V24 S).